A 161-amino-acid polypeptide reads, in one-letter code: uncharacterized protein (161 aa).

The next 2 membrane-spanning stretches (helical) occupy residues 13 to 35 (VAAV…PHAN) and 40 to 62 (VFSA…PFIS).

It is found in the cell membrane. This is an uncharacterized protein from Archaeoglobus fulgidus (strain ATCC 49558 / DSM 4304 / JCM 9628 / NBRC 100126 / VC-16).